The sequence spans 802 residues: E3 ubiquitin-protein ligase RNF10 (802 aa).

Composition is skewed to low complexity over residues 1-31 (MPQS…SGSS), 78-90 (SNQS…QKSK), and 104-113 (SKPFSSSSNG). A disordered region spans residues 1–134 (MPQSSPSTAA…AEFSPAQFSG (134 aa)). The residue at position 5 (Ser5) is a Phosphoserine. Ser110 carries the phosphoserine modification. A compositionally biased stretch (basic and acidic residues) spans 114–124 (GRRDEVAEAQR). The residue at position 128 (Ser128) is a Phosphoserine. The RING-type zinc finger occupies 225–267 (CPICLYPPTAAKITRCGHIFCWACILHYLSLSERTWSKCPICY). The span at 645–654 (DSALGPTSTE) shows a compositional bias: polar residues. Disordered regions lie at residues 645 to 664 (DSAL…LSPL), 716 to 753 (DGWP…VPSF), and 767 to 802 (KLDT…VHTK). Residues 716–728 (DGWPKAAPKKDDN) show a composition bias toward basic and acidic residues. Polar residues predominate over residues 793–802 (LFSTSVVHTK).

It belongs to the RNF10 family. As to quaternary structure, interacts with MEOX2.

Its subcellular location is the cytoplasm. It is found in the nucleus. The enzyme catalyses S-ubiquitinyl-[E2 ubiquitin-conjugating enzyme]-L-cysteine + [acceptor protein]-L-lysine = [E2 ubiquitin-conjugating enzyme]-L-cysteine + N(6)-ubiquitinyl-[acceptor protein]-L-lysine.. The protein operates within protein modification; protein ubiquitination. Functionally, E3 ubiquitin-protein ligase that catalyzes monoubiquitination of 40S ribosomal proteins RPS2/us5 and RPS3/us3 in response to ribosome stalling. Part of a ribosome quality control that takes place when ribosomes have stalled during translation initiation (iRQC): RNF10 acts by mediating monoubiquitination of RPS2/us5 and RPS3/us3, promoting their degradation by the proteasome. Also promotes ubiquitination of 40S ribosomal proteins in response to ribosome stalling during translation elongation. The action of RNF10 in iRQC is counteracted by USP10. May also act as a transcriptional factor involved in the regulation of MAG (Myelin-associated glycoprotein) expression. Acts as a regulator of Schwann cell differentiation and myelination. The sequence is that of E3 ubiquitin-protein ligase RNF10 from Rattus norvegicus (Rat).